The sequence spans 372 residues: N-methyl-L-tryptophan oxidase (372 aa).

4-34 lines the FAD pocket; that stretch reads DLIIIGSGSVGAAAGYYATRAGLNVLMTDAH. The residue at position 308 (Cys308) is an S-8alpha-FAD cysteine.

It belongs to the MSOX/MTOX family. MTOX subfamily. Monomer. FAD serves as cofactor.

It catalyses the reaction N(alpha)-methyl-L-tryptophan + O2 + H2O = L-tryptophan + formaldehyde + H2O2. In terms of biological role, catalyzes the oxidative demethylation of N-methyl-L-tryptophan. The sequence is that of N-methyl-L-tryptophan oxidase from Escherichia coli O9:H4 (strain HS).